The primary structure comprises 214 residues: UPF0301 protein NFA_55110 (214 aa).

The disordered stretch occupies residues 1-24 (MARADDPDERKTQGGHGDRRRREF).

It belongs to the UPF0301 (AlgH) family.

This chain is UPF0301 protein NFA_55110, found in Nocardia farcinica (strain IFM 10152).